A 179-amino-acid polypeptide reads, in one-letter code: Ribulose bisphosphate carboxylase small subunit, chloroplastic 1/4 (179 aa).

The N-terminal 58 residues, 1–58 (MAASSTMLSSVATAACAAPAQASMVAPFVGLKSTSAFPVTQKPATGLSTLPSNGGRVQ), are a transit peptide targeting the chloroplast.

Belongs to the RuBisCO small chain family. Heterohexadecamer of 8 large and 8 small subunits.

The protein resides in the plastid. Its subcellular location is the chloroplast. Functionally, ruBisCO catalyzes two reactions: the carboxylation of D-ribulose 1,5-bisphosphate, the primary event in carbon dioxide fixation, as well as the oxidative fragmentation of the pentose substrate. Both reactions occur simultaneously and in competition at the same active site. Although the small subunit is not catalytic it is essential for maximal activity. This is Ribulose bisphosphate carboxylase small subunit, chloroplastic 1/4 (RBCS1) from Fritillaria agrestis (Stinkbells).